The primary structure comprises 158 residues: Class 10 plant pathogenesis-related protein 2D (158 aa).

Asp8 contributes to the trans-zeatin binding site. Residues Pro32, Val35, and Ile38 each contribute to the Ca(2+) site. Trans-zeatin contacts are provided by Glu60, His69, Tyr81, and Tyr83.

It belongs to the BetVI family.

It is found in the cytoplasm. It localises to the cytosol. Its function is as follows. Class II ribonuclease (RNase). Binds to cytokinins. Interacts with melatonin. The sequence is that of Class 10 plant pathogenesis-related protein 2D from Lupinus luteus (European yellow lupine).